Reading from the N-terminus, the 578-residue chain is MIVSPCIAPRIPGTRLRKAMLAGVALVGLLSAGQLWAFNLDDVAAKAKDLAGQKYEAPKSNLPPVFRDMKYADYQKIRFLQEKAEWAKDKTPFKLSFYHQGMHFDTPVTINEITANKVEEIKYDPSRFEFGDVPHDADATKNLGYAGFRVLYPINKADKQDEIMTLLGASYFRVVGKGHRYGLSARGLAIDTALPSGEEFPRFREFWIEKPKPKDKHLVIYALLDSPRSTGAYKLTLRPGEDTLVDVKSRVYLRDNVSRLGIAPLTSMYLFGPNQPSKVMNYRPALHDSEGLSIHAGNGEWLWRPLNNPKHLAVSNFSVENPRGFGLLQRQRDFSDYEDLDDEYEKRPSTWIEPKGDWGKGTVDLVEIPTADETNDNIVAFWSPEKLPEVGKPFEYDYRLRWTIKEDQLHSPELGWVKQTLRSTGDVKQSNLIRQADGTVAFLVDFIGPNLATLPADTAVRSQVSVGDNAEVVENNLRYNPETKGWRLTLRLKVQDPKKATEMRAALLRDVPVEAPKPAKDSKQDKAAAKHAHAKAEKAKAEQPAEQPAADAASTNGTPATTEKVLTETWSYQLPADE.

Residues 1–37 form the signal peptide; that stretch reads MIVSPCIAPRIPGTRLRKAMLAGVALVGLLSAGQLWA. The disordered stretch occupies residues 511-578; sequence VPVEAPKPAK…TWSYQLPADE (68 aa). A compositionally biased stretch (basic and acidic residues) spans 517–543; the sequence is KPAKDSKQDKAAAKHAHAKAEKAKAEQ. Over residues 544–554 the composition is skewed to low complexity; sequence PAEQPAADAAS.

This sequence belongs to the OpgD/OpgG family.

The protein resides in the periplasm. It participates in glycan metabolism; osmoregulated periplasmic glucan (OPG) biosynthesis. Functionally, involved in the biosynthesis of osmoregulated periplasmic glucans (OPGs). The polypeptide is Glucans biosynthesis protein G (Pseudomonas entomophila (strain L48)).